The following is a 507-amino-acid chain: RNA polymerase I-specific transcription initiation factor RRN11 (507 aa).

Positions 37 to 47 (KSTTTDSLPTP) are enriched in polar residues. Disordered regions lie at residues 37-76 (KSTT…LQQK) and 89-124 (GEIY…SDEE). Residues 97–108 (SETDSQEEETEE) show a composition bias toward acidic residues. The segment covering 109–124 (GGEHDTGIDKEDSDEE) has biased composition (basic and acidic residues).

Component of the core factor (CF) complex, which consists of RRN6, RRN7 and RRN11. The CF heterotrimer may further dimerize to form a hexamer. RRN11 interacts with RRN6, RRN7 and SPT15.

The protein localises to the nucleus. The protein resides in the nucleolus. Its function is as follows. Acts as a component of the core factor (CF) complex which is essential for the initiation of rDNA transcription by RNA polymerase I. After binding of UAF (upstream activation factor) to an upstream element of the promoter, CF is recruited in a SPT15/TBP-dependent manner to form a preinitiation complex. The polypeptide is RNA polymerase I-specific transcription initiation factor RRN11 (RRN11) (Saccharomyces cerevisiae (strain ATCC 204508 / S288c) (Baker's yeast)).